Consider the following 335-residue polypeptide: Eukaryotic translation initiation factor 3 subunit I (335 aa).

WD repeat units follow at residues 8-47 (GHER…RLGT), 50-91 (GHQG…KTWD), 145-184 (CAES…LLFN), 189-228 (EPDL…VMKT), and 286-325 (GHFG…FDFT).

This sequence belongs to the eIF-3 subunit I family. In terms of assembly, component of the eukaryotic translation initiation factor 3 (eIF-3) complex.

It is found in the cytoplasm. Component of the eukaryotic translation initiation factor 3 (eIF-3) complex, which is involved in protein synthesis of a specialized repertoire of mRNAs and, together with other initiation factors, stimulates binding of mRNA and methionyl-tRNAi to the 40S ribosome. The eIF-3 complex specifically targets and initiates translation of a subset of mRNAs involved in cell proliferation. The sequence is that of Eukaryotic translation initiation factor 3 subunit I (tif34) from Sclerotinia sclerotiorum (strain ATCC 18683 / 1980 / Ss-1) (White mold).